Consider the following 158-residue polypeptide: Protein SREK1IP1 (158 aa).

Disordered regions lie at residues 1–20 (MAAPGPNKDNIRAGCKRCGY) and 45–158 (SSTS…SDTD). Residues 13-30 (AGCKRCGYPGHLTFECRN) form a CCHC-type zinc finger. A compositionally biased stretch (basic and acidic residues) spans 59 to 79 (ALSKEKIFGSHSKGSQEDSRK). 2 stretches are compositionally biased toward basic residues: residues 80 to 98 (EKHKKKSKERSRGKAKKRS) and 111 to 140 (KKKKKRKSNKKKGKKEKREKERKHKKKQKK). The segment covering 145 to 158 (SSSSDSSSESSDTD) has biased composition (low complexity).

Its function is as follows. Possible splicing regulator involved in the control of cellular survival. In Danio rerio (Zebrafish), this protein is Protein SREK1IP1 (srek1ip1).